Consider the following 248-residue polypeptide: N-acylneuraminate-9-phosphatase (248 aa).

Position 12 (Asp12) interacts with Mg(2+). Phosphate-binding residues include Leu13, Asp14, Thr131, Asn132, and Lys164. Asp14 is a binding site for Mg(2+). Residue Asp189 participates in Mg(2+) binding.

It belongs to the HAD-like hydrolase superfamily. NANP family. Mg(2+) serves as cofactor.

It catalyses the reaction N-acetylneuraminate 9-phosphate + H2O = N-acetylneuraminate + phosphate. It carries out the reaction N-glycoloylneuraminate 9-phosphate + H2O = N-glycoloylneuraminate + phosphate. It participates in amino-sugar metabolism; N-acetylneuraminate biosynthesis. With respect to regulation, inhibited by calcium. Inhibited by vanadate, sodium orthovanadate and phosphonate. Catalyzes the dephosphorylation of N-acylneuraminate 9-phosphate (Neu5Ac-9-P) to N-acetylneuraminic acid (Neu5Ac or sialic acid). Can also use N-glycoloylneuraminate 9-phosphate as substrate. The protein is N-acylneuraminate-9-phosphatase of Homo sapiens (Human).